Here is a 313-residue protein sequence, read N- to C-terminus: Ribosomal RNA small subunit methyltransferase H (313 aa).

Residues 35-37, Asp55, Phe79, Asp101, and Gln108 each bind S-adenosyl-L-methionine; that span reads GGH.

It belongs to the methyltransferase superfamily. RsmH family.

Its subcellular location is the cytoplasm. The catalysed reaction is cytidine(1402) in 16S rRNA + S-adenosyl-L-methionine = N(4)-methylcytidine(1402) in 16S rRNA + S-adenosyl-L-homocysteine + H(+). Its function is as follows. Specifically methylates the N4 position of cytidine in position 1402 (C1402) of 16S rRNA. This is Ribosomal RNA small subunit methyltransferase H from Salmonella typhi.